Reading from the N-terminus, the 253-residue chain is Glucosamine-6-phosphate deaminase (253 aa).

The Proton acceptor; for enolization step role is filled by aspartate 67. Residue asparagine 136 is the For ring-opening step of the active site. The active-site Proton acceptor; for ring-opening step is histidine 138. Glutamate 143 functions as the For ring-opening step in the catalytic mechanism.

This sequence belongs to the glucosamine/galactosamine-6-phosphate isomerase family. NagB subfamily.

The catalysed reaction is alpha-D-glucosamine 6-phosphate + H2O = beta-D-fructose 6-phosphate + NH4(+). It functions in the pathway amino-sugar metabolism; N-acetylneuraminate degradation; D-fructose 6-phosphate from N-acetylneuraminate: step 5/5. Catalyzes the reversible isomerization-deamination of glucosamine 6-phosphate (GlcN6P) to form fructose 6-phosphate (Fru6P) and ammonium ion. The protein is Glucosamine-6-phosphate deaminase of Thermoanaerobacter sp. (strain X514).